The following is a 151-amino-acid chain: Nucleoside diphosphate kinase (151 aa).

Residues lysine 9, phenylalanine 57, arginine 86, threonine 92, arginine 103, and asparagine 113 each coordinate ATP. Residue histidine 116 is the Pros-phosphohistidine intermediate of the active site.

Belongs to the NDK family. In terms of assembly, homotetramer. The cofactor is Mg(2+).

Its subcellular location is the cytoplasm. The catalysed reaction is a 2'-deoxyribonucleoside 5'-diphosphate + ATP = a 2'-deoxyribonucleoside 5'-triphosphate + ADP. It carries out the reaction a ribonucleoside 5'-diphosphate + ATP = a ribonucleoside 5'-triphosphate + ADP. In terms of biological role, major role in the synthesis of nucleoside triphosphates other than ATP. The ATP gamma phosphate is transferred to the NDP beta phosphate via a ping-pong mechanism, using a phosphorylated active-site intermediate. The polypeptide is Nucleoside diphosphate kinase (Chloroflexus aggregans (strain MD-66 / DSM 9485)).